We begin with the raw amino-acid sequence, 633 residues long: Bifunctional enzyme CysN/CysC (633 aa).

The sulfate adenylyltransferase stretch occupies residues 1–463 (MSHQSDLISE…REERAGRFGQ (463 aa)). The region spanning 22–241 (KELLRFLTCG…TVEIAADRNL (220 aa)) is the tr-type G domain. Positions 31–38 (GNVDDGKS) are G1. Position 31–38 (31–38 (GNVDDGKS)) interacts with GTP. Residues 89–93 (GITID) form a G2 region. Residues 110–113 (DTPG) form a G3 region. GTP is bound by residues 110-114 (DTPGH) and 165-168 (NKMD). The tract at residues 165–168 (NKMD) is G4. The tract at residues 204-206 (SAL) is G5. An adenylyl-sulfate kinase region spans residues 464–633 (QPATVLFSGL…LDLLRERQAI (170 aa)). ATP is bound at residue 472–479 (GLSGAGKS).

It in the C-terminal section; belongs to the APS kinase family. This sequence in the N-terminal section; belongs to the TRAFAC class translation factor GTPase superfamily. Classic translation factor GTPase family. CysN/NodQ subfamily. In terms of assembly, heterodimer composed of CysD, the smaller subunit, and CysNC.

It catalyses the reaction sulfate + ATP + H(+) = adenosine 5'-phosphosulfate + diphosphate. The catalysed reaction is adenosine 5'-phosphosulfate + ATP = 3'-phosphoadenylyl sulfate + ADP + H(+). The protein operates within sulfur metabolism; hydrogen sulfide biosynthesis; sulfite from sulfate: step 1/3. It functions in the pathway sulfur metabolism; hydrogen sulfide biosynthesis; sulfite from sulfate: step 2/3. Functionally, with CysD forms the ATP sulfurylase (ATPS) that catalyzes the adenylation of sulfate producing adenosine 5'-phosphosulfate (APS) and diphosphate, the first enzymatic step in sulfur assimilation pathway. APS synthesis involves the formation of a high-energy phosphoric-sulfuric acid anhydride bond driven by GTP hydrolysis by CysN coupled to ATP hydrolysis by CysD. In terms of biological role, APS kinase catalyzes the synthesis of activated sulfate. This is Bifunctional enzyme CysN/CysC (cysNC) from Pseudomonas aeruginosa (strain ATCC 15692 / DSM 22644 / CIP 104116 / JCM 14847 / LMG 12228 / 1C / PRS 101 / PAO1).